The chain runs to 193 residues: Phosphoheptose isomerase (193 aa).

Residues 37 to 193 (LADSFKAGGK…QLIEKEMVKA (157 aa)) enclose the SIS domain. 52–54 (NGG) contributes to the substrate binding site. 2 residues coordinate Zn(2+): His-61 and Glu-65. Substrate-binding positions include Glu-65, 93–94 (ND), 119–121 (STS), Ser-124, and Gln-172. Zn(2+) contacts are provided by Gln-172 and His-180.

This sequence belongs to the SIS family. GmhA subfamily. As to quaternary structure, homotetramer. Zn(2+) is required as a cofactor.

The protein resides in the cytoplasm. It carries out the reaction 2 D-sedoheptulose 7-phosphate = D-glycero-alpha-D-manno-heptose 7-phosphate + D-glycero-beta-D-manno-heptose 7-phosphate. Its pathway is carbohydrate biosynthesis; D-glycero-D-manno-heptose 7-phosphate biosynthesis; D-glycero-alpha-D-manno-heptose 7-phosphate and D-glycero-beta-D-manno-heptose 7-phosphate from sedoheptulose 7-phosphate: step 1/1. In terms of biological role, catalyzes the isomerization of sedoheptulose 7-phosphate in D-glycero-D-manno-heptose 7-phosphate. In Yersinia enterocolitica serotype O:8 / biotype 1B (strain NCTC 13174 / 8081), this protein is Phosphoheptose isomerase.